The primary structure comprises 390 residues: GTPase Obg (390 aa).

The Obg domain maps to 1–159 (MKFVDEASIL…RDLMLELMLL (159 aa)). A disordered region spans residues 127–147 (NTRFKSSVNRTPRQKTMGTPG). Polar residues predominate over residues 129–143 (RFKSSVNRTPRQKTM). An OBG-type G domain is found at 160–333 (ADVGMLGMPN…LCWDVMTFII (174 aa)). GTP is bound by residues 166-173 (GMPNAGKS), 191-195 (FTTLV), 213-216 (DIPG), 283-286 (NKID), and 314-316 (SAA). Mg(2+) contacts are provided by serine 173 and threonine 193.

The protein belongs to the TRAFAC class OBG-HflX-like GTPase superfamily. OBG GTPase family. In terms of assembly, monomer. The cofactor is Mg(2+).

It localises to the cytoplasm. An essential GTPase which binds GTP, GDP and possibly (p)ppGpp with moderate affinity, with high nucleotide exchange rates and a fairly low GTP hydrolysis rate. Plays a role in control of the cell cycle, stress response, ribosome biogenesis and in those bacteria that undergo differentiation, in morphogenesis control. The sequence is that of GTPase Obg from Citrobacter koseri (strain ATCC BAA-895 / CDC 4225-83 / SGSC4696).